We begin with the raw amino-acid sequence, 195 residues long: Small ribosomal subunit protein bS16 (195 aa).

The span at 171–181 (PEAPVAAAEPA) shows a compositional bias: low complexity. The segment at 171–195 (PEAPVAAAEPAPEVKAEEKEEGGEA) is disordered.

Belongs to the bacterial ribosomal protein bS16 family.

The polypeptide is Small ribosomal subunit protein bS16 (Chlorobium luteolum (strain DSM 273 / BCRC 81028 / 2530) (Pelodictyon luteolum)).